Consider the following 1165-residue polypeptide: Sperm-associated antigen 5 (1165 aa).

The disordered stretch occupies residues 1–23 (MWRVKTLNLGLSPSPQKGKPAMS). Ser-12, Ser-14, Ser-66, Ser-161, Ser-321, Ser-333, and Ser-342 each carry phosphoserine. Residues 431-457 (TVPHREARDSSTQTDSSPCGVTKTPKH) are disordered. Residues 440–449 (SSTQTDSSPC) show a composition bias toward polar residues. Residues 453 to 821 (KTPKHLQDSK…LRDTVDSLRA (369 aa)) form an interaction with KNSTRN region. The stretch at 509–856 (RSKTLVSSCS…LLAEQLQSLT (348 aa)) forms a coiled coil. The interval 875–907 (PSTGSAPAQEHPLSNDSSISEQTPTAAVDEVPE) is disordered. Over residues 876–897 (STGSAPAQEHPLSNDSSISEQT) the composition is skewed to polar residues. A coiled-coil region spans residues 937-1146 (DLEKSLAEMS…IQHVYETLLS (210 aa)). Ser-946 bears the Phosphoserine; by GSK3-beta mark.

Homodimer, with a globular head domain and a long stalk. Homooligomer; the globular head domains associate, resulting in aster-like structures. Binds to microtubules in the mitotic spindle. Interacts with DCLRE1B/Apollo. Part of an astrin (SPAG5)-kinastrin (SKAP) complex containing KNSTRN, SPAG5, PLK1, DYNLL1 and SGO2A. Interacts with KNSTRN. Interacts with RPTOR; this interaction competes with RPTOR binding to MTOR, resulting in decreased mTORC1 formation. Interacts with G3BP1. The complex formed with G3BP1 and RPTOR is increased by oxidative stress. Interacts with OSBPL8, PCM1 and CDK5RAP2. Interacts (via C-terminus) with NUMA1 (via C-terminus); this interaction promotes the recruitment of SPAG5 to the microtubules at spindle poles in a dynein-dynactin-dependent manner. Interacts with DYNLL1. Post-translationally, phosphorylated by AURKA. Detected in testis, but not in the other tissues tested.

The protein localises to the cytoplasm. It is found in the cytoskeleton. The protein resides in the spindle. Its subcellular location is the spindle pole. It localises to the chromosome. The protein localises to the centromere. It is found in the kinetochore. The protein resides in the midbody. Its subcellular location is the microtubule organizing center. It localises to the centrosome. The protein localises to the centriolar satellite. In terms of biological role, essential component of the mitotic spindle required for normal chromosome segregation and progression into anaphase. Required for chromosome alignment, normal timing of sister chromatid segregation, and maintenance of spindle pole architecture. In complex with SKAP, promotes stable microtubule-kinetochore attachments. May contribute to the regulation of separase activity. May regulate AURKA localization to mitotic spindle, but not to centrosomes and CCNB1 localization to both mitotic spindle and centrosomes. Involved in centriole duplication. Required for CDK5RAP22, CEP152, WDR62 and CEP63 centrosomal localization and promotes the centrosomal localization of CDK2. In non-mitotic cells, upon stress induction, inhibits mammalian target of rapamycin complex 1 (mTORC1) association and recruits the mTORC1 component RPTOR to stress granules (SGs), thereby preventing mTORC1 hyperactivation-induced apoptosis. May enhance GSK3B-mediated phosphorylation of other substrates, such as MAPT/TAU. In Mus musculus (Mouse), this protein is Sperm-associated antigen 5 (Spag5).